A 412-amino-acid chain; its full sequence is Probable tRNA pseudouridine synthase D (412 aa).

D97 functions as the Nucleophile in the catalytic mechanism. In terms of domain architecture, TRUD spans 167-370 (ALPNYYGYQR…YGSYRRARLQ (204 aa)).

Belongs to the pseudouridine synthase TruD family.

It carries out the reaction uridine(13) in tRNA = pseudouridine(13) in tRNA. Could be responsible for synthesis of pseudouridine from uracil-13 in transfer RNAs. This Pyrobaculum neutrophilum (strain DSM 2338 / JCM 9278 / NBRC 100436 / V24Sta) (Thermoproteus neutrophilus) protein is Probable tRNA pseudouridine synthase D.